The chain runs to 62 residues: Photosystem II reaction center protein Z (62 aa).

2 helical membrane-spanning segments follow: residues 8-28 (ALIG…VAYA) and 41-61 (WVGS…NFFV).

It belongs to the PsbZ family. As to quaternary structure, PSII is composed of 1 copy each of membrane proteins PsbA, PsbB, PsbC, PsbD, PsbE, PsbF, PsbH, PsbI, PsbJ, PsbK, PsbL, PsbM, PsbT, PsbX, PsbY, PsbZ, Psb30/Ycf12, peripheral proteins PsbO, CyanoQ (PsbQ), PsbU, PsbV and a large number of cofactors. It forms dimeric complexes.

Its subcellular location is the cellular thylakoid membrane. May control the interaction of photosystem II (PSII) cores with the light-harvesting antenna, regulates electron flow through the 2 photosystem reaction centers. PSII is a light-driven water plastoquinone oxidoreductase, using light energy to abstract electrons from H(2)O, generating a proton gradient subsequently used for ATP formation. In Nostoc punctiforme (strain ATCC 29133 / PCC 73102), this protein is Photosystem II reaction center protein Z.